The following is a 234-amino-acid chain: MFVMRCDFVSIFPEYFDVLDISLIGKARRNGLLDLRVHNLREYSEAGRVDSSPYGGGPGMVMSAEPWARAIEHIATGESLVVFPSPSGQPYSHDLAQSLSSEMHIVFCCGRYEGIDNRIYEWTATRLRSSGISIGDYVLNGGEIAALAILEGFVRFIPGVLGNPESLVEESYQYNLLEYPVYTKPAVWRGLEVPDILLSGNHDLIREWRYKKQLEITQKTRPDLYSTHIYETDS.

S-adenosyl-L-methionine-binding positions include glycine 110 and 134–139 (IGDYVL).

This sequence belongs to the RNA methyltransferase TrmD family. In terms of assembly, homodimer.

It is found in the cytoplasm. It catalyses the reaction guanosine(37) in tRNA + S-adenosyl-L-methionine = N(1)-methylguanosine(37) in tRNA + S-adenosyl-L-homocysteine + H(+). In terms of biological role, specifically methylates guanosine-37 in various tRNAs. The sequence is that of tRNA (guanine-N(1)-)-methyltransferase from Tropheryma whipplei (strain Twist) (Whipple's bacillus).